The chain runs to 65 residues: Large ribosomal subunit protein bL35 (65 aa).

It belongs to the bacterial ribosomal protein bL35 family.

The sequence is that of Large ribosomal subunit protein bL35 from Enterobacter sp. (strain 638).